A 310-amino-acid polypeptide reads, in one-letter code: Olfactory receptor 4K14 (310 aa).

Residues 1-25 (MDPQNYSLVSEFVLHGLCTSRHLQN) lie on the Extracellular side of the membrane. Asn5 carries an N-linked (GlcNAc...) asparagine glycan. Residues 26-49 (FFFIFFFGVYVAIMLGNLLILVTV) form a helical membrane-spanning segment. At 50-58 (ISDPCLHSS) the chain is on the cytoplasmic side. The chain crosses the membrane as a helical span at residues 59–80 (PMYFLLGNLAFLDMWLASFATP). Topologically, residues 81 to 101 (KMIRDFLSDQKLISFGGCMAQ) are extracellular. The cysteines at positions 98 and 190 are disulfide-linked. A helical transmembrane segment spans residues 102–121 (IFFLHFTGGAEMVLLVSMAY). The Cytoplasmic segment spans residues 122–140 (DRYVAICKPLHYMTLMSWQ). The chain crosses the membrane as a helical span at residues 141-159 (TCIRLVLASWVVGFVHSIS). Topologically, residues 160–196 (QVAFTVNLPYCGPNEVDSFFCDLPLVIKLACMDTYVL) are extracellular. The chain crosses the membrane as a helical span at residues 197–220 (GIIMISDSGLLSLSCFLLLLISYT). Residues 221-236 (VILLAIRQRAAGSTSK) are Cytoplasmic-facing. The helical transmembrane segment at 237–259 (ALSTCSAHIMVVTLFFGPCIFVY) threads the bilayer. Topologically, residues 260-270 (VRPFSRFSVDK) are extracellular. A helical membrane pass occupies residues 271–290 (LLSVFYTIFTPLLNPIIYTL). Topologically, residues 291-310 (RNEEMKAAMKKLQNRRVTFQ) are cytoplasmic.

The protein belongs to the G-protein coupled receptor 1 family.

Its subcellular location is the cell membrane. Its function is as follows. Odorant receptor. This is Olfactory receptor 4K14 (OR4K14) from Homo sapiens (Human).